The following is a 398-amino-acid chain: S-adenosylmethionine synthase (398 aa).

ATP is bound at residue His16. Residue Asp18 participates in Mg(2+) binding. Glu44 serves as a coordination point for K(+). Glu57 and Gln100 together coordinate L-methionine. The flexible loop stretch occupies residues 100–110 (QSPDIAQGVNE). Residues 175 to 177 (DAK), 242 to 243 (RF), Asp251, 257 to 258 (RK), Ala274, and Lys278 each bind ATP. Position 251 (Asp251) interacts with L-methionine. Lys282 is an L-methionine binding site.

It belongs to the AdoMet synthase family. In terms of assembly, homotetramer; dimer of dimers. Requires Mg(2+) as cofactor. It depends on K(+) as a cofactor.

Its subcellular location is the cytoplasm. The catalysed reaction is L-methionine + ATP + H2O = S-adenosyl-L-methionine + phosphate + diphosphate. The protein operates within amino-acid biosynthesis; S-adenosyl-L-methionine biosynthesis; S-adenosyl-L-methionine from L-methionine: step 1/1. Its function is as follows. Catalyzes the formation of S-adenosylmethionine (AdoMet) from methionine and ATP. The overall synthetic reaction is composed of two sequential steps, AdoMet formation and the subsequent tripolyphosphate hydrolysis which occurs prior to release of AdoMet from the enzyme. The sequence is that of S-adenosylmethionine synthase from Streptococcus agalactiae serotype III (strain NEM316).